Here is a 148-residue protein sequence, read N- to C-terminus: Multiprotein-bridging factor 1c (148 aa).

The 55-residue stretch at 91–145 folds into the HTH cro/C1-type domain; the sequence is IQKARLEKKMSQADLAKQINERTQVVQEYENGKAVPNQAVLAKMEKVLGVKLRGK. The segment at residues 102 to 121 is a DNA-binding region (H-T-H motif); that stretch reads QADLAKQINERTQVVQEYEN.

This sequence belongs to the MBF1 family. Binds to TPS5. As to expression, expressed in leaves, roots, stems, flowers, siliques and shoots. Not detected in seeds.

The protein localises to the nucleus. It localises to the nucleolus. The protein resides in the cytoplasm. Its function is as follows. Transcriptional coactivator that stimulates transcriptional activity by bridging regulatory proteins and TBP, thereby recruiting TBP to promoters occupied by DNA-binding regulators. Involved in the tolerance to heat and osmotic stress by partially activating the ethylene-response signal transduction pathway. This chain is Multiprotein-bridging factor 1c (MBF1C), found in Arabidopsis thaliana (Mouse-ear cress).